We begin with the raw amino-acid sequence, 857 residues long: DNA mismatch repair protein MutS (857 aa).

603 to 610 contributes to the ATP binding site; that stretch reads GPNMAGKS.

The protein belongs to the DNA mismatch repair MutS family.

In terms of biological role, this protein is involved in the repair of mismatches in DNA. It is possible that it carries out the mismatch recognition step. This protein has a weak ATPase activity. The polypeptide is DNA mismatch repair protein MutS (Methanothrix thermoacetophila (strain DSM 6194 / JCM 14653 / NBRC 101360 / PT) (Methanosaeta thermophila)).